We begin with the raw amino-acid sequence, 400 residues long: Acetate kinase (400 aa).

Asn-10 serves as a coordination point for Mg(2+). Lys-17 contacts ATP. A substrate-binding site is contributed by Arg-91. Asp-150 (proton donor/acceptor) is an active-site residue. ATP contacts are provided by residues 210–214 (HLGNG), 285–287 (DCR), and 333–337 (GIGEN). A Mg(2+)-binding site is contributed by Glu-387.

Belongs to the acetokinase family. Homodimer. The cofactor is Mg(2+). Mn(2+) serves as cofactor.

Its subcellular location is the cytoplasm. It carries out the reaction acetate + ATP = acetyl phosphate + ADP. Its pathway is metabolic intermediate biosynthesis; acetyl-CoA biosynthesis; acetyl-CoA from acetate: step 1/2. Functionally, catalyzes the formation of acetyl phosphate from acetate and ATP. Can also catalyze the reverse reaction. This is Acetate kinase from Salmonella typhi.